A 307-amino-acid polypeptide reads, in one-letter code: UDP-N-acetylenolpyruvoylglucosamine reductase (307 aa).

Positions 29-197 constitute an FAD-binding PCMH-type domain; sequence RVGGPAEWFA…LSARFRLDPG (169 aa). Arg176 is a catalytic residue. Catalysis depends on Ser227, which acts as the Proton donor. Glu297 is an active-site residue.

It belongs to the MurB family. FAD is required as a cofactor.

Its subcellular location is the cytoplasm. It carries out the reaction UDP-N-acetyl-alpha-D-muramate + NADP(+) = UDP-N-acetyl-3-O-(1-carboxyvinyl)-alpha-D-glucosamine + NADPH + H(+). The protein operates within cell wall biogenesis; peptidoglycan biosynthesis. Functionally, cell wall formation. This Prochlorococcus marinus (strain MIT 9313) protein is UDP-N-acetylenolpyruvoylglucosamine reductase.